The sequence spans 25 residues: MNEQSMKPYVIGLDLGGTNSVFGIV.

It belongs to the ROK (NagC/XylR) family. In terms of assembly, homodimer.

It catalyses the reaction D-glucose + ATP = D-glucose 6-phosphate + ADP + H(+). It carries out the reaction D-mannose + ATP = D-mannose 6-phosphate + ADP + H(+). It participates in carbohydrate degradation; glycolysis; D-glyceraldehyde 3-phosphate and glycerone phosphate from D-glucose: step 1/4. Its pathway is carbohydrate metabolism; mannose metabolism. Competitively inhibited by 2-deoxy-glucose. In terms of biological role, the enzyme has great affinity for glucose and mannose. This Segatella bryantii (Prevotella bryantii) protein is Glucomannokinase.